Consider the following 1088-residue polypeptide: RNA-directed RNA polymerase (1088 aa).

The region spanning 501–687 (LSYGDVTRFL…AKRYIAGGKI (187 aa)) is the RdRp catalytic domain.

This sequence belongs to the reoviridae RNA-directed RNA polymerase family. Interacts with VP3 (Potential). Interacts with VP2; this interaction activates VP1. Interacts with NSP5; this interaction is probably necessary for the formation of functional virus factories. Interacts with NSP2; this interaction is weak. The cofactor is Mg(2+).

The protein localises to the virion. The enzyme catalyses RNA(n) + a ribonucleoside 5'-triphosphate = RNA(n+1) + diphosphate. RNA-directed RNA polymerase that is involved in both transcription and genome replication. Together with VP3 capping enzyme, forms an enzyme complex positioned near the channels situated at each of the five-fold vertices of the core. Following infection, the outermost layer of the virus is lost, leaving a double-layered particle (DLP) made up of the core and VP6 shell. VP1 then catalyzes the transcription of fully conservative plus-strand genomic RNAs that are extruded through the DLP's channels into the cytoplasm where they function as mRNAs for translation of viral proteins. One copy of each of the viral (+)RNAs is also recruited during core assembly, together with newly synthesized polymerase complexes and VP2. The polymerase of these novo-formed particles catalyzes the synthesis of complementary minus-strands leading to dsRNA formation. To do so, the polymerase specifically recognizes and binds 4 bases 5'-UGUG-3' in the conserved 3'-sequence of plus-strand RNA templates. VP2 presumably activates the autoinhibited VP1-RNA complex to coordinate packaging and genome replication. Once dsRNA synthesis is complete, the polymerase switches to the transcriptional mode, thus providing secondary transcription. The chain is RNA-directed RNA polymerase from Rotavirus A (strain RVA/Human/Philippines/L26/1987/G12P1B[4]) (RV-A).